The sequence spans 210 residues: uncharacterized protein (210 aa).

The N-terminal stretch at 1–17 (MKRTAVSLCLLTGLLSG) is a signal peptide. C18 carries the N-palmitoyl cysteine lipid modification. C18 carries S-diacylglycerol cysteine lipidation. A compositionally biased stretch (polar residues) spans 176–195 (EMKTSPQGSPVSENENANGE). Residues 176–210 (EMKTSPQGSPVSENENANGETRQDMKIDRNDKNAR) are disordered. Residues 196–210 (TRQDMKIDRNDKNAR) are compositionally biased toward basic and acidic residues.

Its subcellular location is the cell membrane. This is an uncharacterized protein from Bacillus subtilis (strain 168).